The sequence spans 195 residues: MTVERIENGVIVQRNTKEIEISITLDTVHGKLEGSTGVNFFDHLLNTFCHYSGLGLRVSTCESKDGILHHLIEDFGISLGQAFRELFDYTKVKRFGEASVPMNEALIGCYVDLSGRPFFQKNFEFSVEKIEDMPVEGFEEFMNGFVNHARITVHFFKFFGKNDHHISESAMKSFGLAIARALERSDTRTTKGVID.

This sequence belongs to the imidazoleglycerol-phosphate dehydratase family.

It is found in the cytoplasm. It carries out the reaction D-erythro-1-(imidazol-4-yl)glycerol 3-phosphate = 3-(imidazol-4-yl)-2-oxopropyl phosphate + H2O. It participates in amino-acid biosynthesis; L-histidine biosynthesis; L-histidine from 5-phospho-alpha-D-ribose 1-diphosphate: step 6/9. The sequence is that of Imidazoleglycerol-phosphate dehydratase from Thermotoga neapolitana (strain ATCC 49049 / DSM 4359 / NBRC 107923 / NS-E).